The primary structure comprises 396 residues: uncharacterized protein (396 aa).

2 consecutive transmembrane segments (helical) span residues 27–47 (LLIACLFISGSLSIVVFQICL) and 69–89 (FIVLLCMILNMVAPSSLNVTF). The HXXXXD motif signature appears at 117 to 122 (HQMYAD). The next 2 helical transmembrane spans lie at 123 to 143 (WIYLWWLSFVSNLGGNVYIIL) and 372 to 392 (LTPRILSYYGFFAFLILVFVM).

The protein belongs to the 1-acyl-sn-glycerol-3-phosphate acyltransferase family.

The protein localises to the membrane. This is an uncharacterized protein from Saccharomyces cerevisiae (strain ATCC 204508 / S288c) (Baker's yeast).